The chain runs to 49 residues: Small ribosomal subunit protein eS31 (49 aa).

The Zn(2+) site is built by Cys21, Cys24, Cys39, and Cys42. The C4-type zinc-finger motif lies at 21–42 (CPRCGPGVFLADHKNRLACGKC).

This sequence belongs to the eukaryotic ribosomal protein eS31 family. As to quaternary structure, part of the 30S ribosomal subunit. Zn(2+) is required as a cofactor.

The protein is Small ribosomal subunit protein eS31 of Methanosarcina mazei (strain ATCC BAA-159 / DSM 3647 / Goe1 / Go1 / JCM 11833 / OCM 88) (Methanosarcina frisia).